A 620-amino-acid chain; its full sequence is Threonine--tRNA ligase (620 aa).

In terms of domain architecture, TGS spans M1–D42. The tract at residues D224–P515 is catalytic. Zn(2+)-binding residues include C315, H366, and H492.

It belongs to the class-II aminoacyl-tRNA synthetase family. As to quaternary structure, homodimer. Zn(2+) serves as cofactor.

It is found in the cytoplasm. It carries out the reaction tRNA(Thr) + L-threonine + ATP = L-threonyl-tRNA(Thr) + AMP + diphosphate + H(+). Functionally, catalyzes the attachment of threonine to tRNA(Thr) in a two-step reaction: L-threonine is first activated by ATP to form Thr-AMP and then transferred to the acceptor end of tRNA(Thr). Also edits incorrectly charged L-seryl-tRNA(Thr). The chain is Threonine--tRNA ligase from Fusobacterium nucleatum subsp. nucleatum (strain ATCC 25586 / DSM 15643 / BCRC 10681 / CIP 101130 / JCM 8532 / KCTC 2640 / LMG 13131 / VPI 4355).